A 233-amino-acid polypeptide reads, in one-letter code: Large ribosomal subunit protein uL3 (233 aa).

This sequence belongs to the universal ribosomal protein uL3 family. In terms of assembly, part of the 50S ribosomal subunit. Forms a cluster with proteins L14 and L19.

In terms of biological role, one of the primary rRNA binding proteins, it binds directly near the 3'-end of the 23S rRNA, where it nucleates assembly of the 50S subunit. In Ureaplasma parvum serovar 3 (strain ATCC 27815 / 27 / NCTC 11736), this protein is Large ribosomal subunit protein uL3.